The sequence spans 247 residues: Segregation and condensation protein A (247 aa).

The protein belongs to the ScpA family. In terms of assembly, component of a cohesin-like complex composed of ScpA, ScpB and the Smc homodimer, in which ScpA and ScpB bind to the head domain of Smc. The presence of the three proteins is required for the association of the complex with DNA.

The protein resides in the cytoplasm. Functionally, participates in chromosomal partition during cell division. May act via the formation of a condensin-like complex containing Smc and ScpB that pull DNA away from mid-cell into both cell halves. The chain is Segregation and condensation protein A from Bacillus cereus (strain ATCC 10987 / NRS 248).